Here is a 397-residue protein sequence, read N- to C-terminus: Riboflavin biosynthesis protein RibBA (397 aa).

Residues 1–199 (MFHRIEEALE…IEDLIAYRRH (199 aa)) are DHBP synthase. Residues 26–27 (RE), D31, 138–142 (RAGHT), and E162 contribute to the D-ribulose 5-phosphate site. E27 serves as a coordination point for Mg(2+). Position 141 (H141) interacts with Mg(2+). Residues 200-397 (HETLVTREVE…VNKLGHLLNL (198 aa)) are GTP cyclohydrolase II. Residue 250–254 (RVHSE) coordinates GTP. 3 residues coordinate Zn(2+): C255, C266, and C268. GTP-binding positions include Q271, 293–295 (EGR), and T315. The Proton acceptor; for GTP cyclohydrolase activity role is filled by D327. The active-site Nucleophile; for GTP cyclohydrolase activity is R329. GTP-binding residues include T350 and K355.

It in the N-terminal section; belongs to the DHBP synthase family. In the C-terminal section; belongs to the GTP cyclohydrolase II family. The cofactor is Mg(2+). It depends on Mn(2+) as a cofactor. Requires Zn(2+) as cofactor.

It catalyses the reaction D-ribulose 5-phosphate = (2S)-2-hydroxy-3-oxobutyl phosphate + formate + H(+). The enzyme catalyses GTP + 4 H2O = 2,5-diamino-6-hydroxy-4-(5-phosphoribosylamino)-pyrimidine + formate + 2 phosphate + 3 H(+). Its pathway is cofactor biosynthesis; riboflavin biosynthesis; 2-hydroxy-3-oxobutyl phosphate from D-ribulose 5-phosphate: step 1/1. It functions in the pathway cofactor biosynthesis; riboflavin biosynthesis; 5-amino-6-(D-ribitylamino)uracil from GTP: step 1/4. Its function is as follows. Catalyzes the conversion of D-ribulose 5-phosphate to formate and 3,4-dihydroxy-2-butanone 4-phosphate. In terms of biological role, catalyzes the conversion of GTP to 2,5-diamino-6-ribosylamino-4(3H)-pyrimidinone 5'-phosphate (DARP), formate and pyrophosphate. The sequence is that of Riboflavin biosynthesis protein RibBA from Bacillus cereus (strain ATCC 10987 / NRS 248).